A 217-amino-acid chain; its full sequence is Gas vesicle protein F2 (217 aa).

The protein belongs to the gas vesicle GvpF/GvpL family. Binds GvpA.

The protein resides in the gas vesicle. It localises to the cytoplasm. Its function is as follows. A minor component of the gas vesicle, may be involved in preventing GvpA aggregation during gas vesicle nucleation. Gas vesicles are hollow, gas filled proteinaceous nanostructures found in several microbial planktonic microorganisms. They allow positioning of halobacteria at the optimal depth for growth in the poorly aerated, shallow brine pools of their habitat. In terms of biological role, expression of 2 c-vac DNA fragments containing 2 divergently transcribed regions (gvpE-gvpF-gvpG-gvpH-gvpI-gvpJ-gvpK-gvpL-gvpM and gvpA-gvpC-gvpN-gvpO) allows H.volcanii to produce gas vesicles. Note that gvpD is not necessary for gas vesicle formation. The chain is Gas vesicle protein F2 from Halobacterium salinarum (strain ATCC 700922 / JCM 11081 / NRC-1) (Halobacterium halobium).